A 185-amino-acid polypeptide reads, in one-letter code: Probable chorismate pyruvate-lyase 1 (185 aa).

Substrate is bound by residues Arg-68, Leu-106, and Glu-164.

This sequence belongs to the UbiC family.

It is found in the cytoplasm. It catalyses the reaction chorismate = 4-hydroxybenzoate + pyruvate. Its pathway is cofactor biosynthesis; ubiquinone biosynthesis. Removes the pyruvyl group from chorismate, with concomitant aromatization of the ring, to provide 4-hydroxybenzoate (4HB) for the ubiquinone pathway. The sequence is that of Probable chorismate pyruvate-lyase 1 from Pseudomonas entomophila (strain L48).